The chain runs to 223 residues: UPF0502 protein Sbal_1765 (223 aa).

It belongs to the UPF0502 family.

The protein is UPF0502 protein Sbal_1765 of Shewanella baltica (strain OS155 / ATCC BAA-1091).